The sequence spans 101 residues: Small ribosomal subunit protein uS14A (101 aa).

It belongs to the universal ribosomal protein uS14 family. Part of the 30S ribosomal subunit. Contacts proteins S3 and S10.

In terms of biological role, binds 16S rRNA, required for the assembly of 30S particles and may also be responsible for determining the conformation of the 16S rRNA at the A site. The chain is Small ribosomal subunit protein uS14A from Salinispora tropica (strain ATCC BAA-916 / DSM 44818 / JCM 13857 / NBRC 105044 / CNB-440).